Consider the following 319-residue polypeptide: Acetyl-coenzyme A carboxylase carboxyl transferase subunit alpha (319 aa).

Residues 35–296 (DLDKEIEQLE…KDMLVKQLEE (262 aa)) enclose the CoA carboxyltransferase C-terminal domain.

The protein belongs to the AccA family. In terms of assembly, acetyl-CoA carboxylase is a heterohexamer composed of biotin carboxyl carrier protein (AccB), biotin carboxylase (AccC) and two subunits each of ACCase subunit alpha (AccA) and ACCase subunit beta (AccD).

It localises to the cytoplasm. The catalysed reaction is N(6)-carboxybiotinyl-L-lysyl-[protein] + acetyl-CoA = N(6)-biotinyl-L-lysyl-[protein] + malonyl-CoA. It functions in the pathway lipid metabolism; malonyl-CoA biosynthesis; malonyl-CoA from acetyl-CoA: step 1/1. Component of the acetyl coenzyme A carboxylase (ACC) complex. First, biotin carboxylase catalyzes the carboxylation of biotin on its carrier protein (BCCP) and then the CO(2) group is transferred by the carboxyltransferase to acetyl-CoA to form malonyl-CoA. This chain is Acetyl-coenzyme A carboxylase carboxyl transferase subunit alpha, found in Vibrio atlanticus (strain LGP32) (Vibrio splendidus (strain Mel32)).